The following is a 199-amino-acid chain: Superoxide dismutase [Mn/Fe] (199 aa).

Residues His-27, His-81, Asp-161, and His-165 each coordinate Fe(3+). Mn(2+) contacts are provided by His-27, His-81, Asp-161, and His-165.

Belongs to the iron/manganese superoxide dismutase family. In terms of assembly, homodimer. Mn(2+) serves as cofactor. It depends on Fe(3+) as a cofactor.

It catalyses the reaction 2 superoxide + 2 H(+) = H2O2 + O2. Functionally, destroys superoxide anion radicals which are normally produced within the cells and which are toxic to biological systems. Catalyzes the dismutation of superoxide anion radicals into O2 and H2O2 by successive reduction and oxidation of the transition metal ion at the active site. The protein is Superoxide dismutase [Mn/Fe] (sodA) of Staphylococcus epidermidis (strain ATCC 35984 / DSM 28319 / BCRC 17069 / CCUG 31568 / BM 3577 / RP62A).